A 667-amino-acid polypeptide reads, in one-letter code: Probable E3 ubiquitin ligase complex SCF subunit sconB (667 aa).

The tract at residues 1–55 (MNGSGSTAKESLFNPTPRKLGLPEDNTMTPYNGVRSIFDNSSGSRQLTDEHTNQE) is disordered. An F-box domain is found at 182 to 228 (IDFITALPPEISFKILSYLDTASLCRAAQVSRAWKCLADDDVVWHRM). WD repeat units lie at residues 347–386 (GHTN…RTLT), 388–426 (HTSG…STYT), 428–464 (HLGG…TFLL), 466–507 (GHSD…RTFQ), 549–593 (RQEP…CLRT), 594–633 (FFGH…CERT), and 636–667 (GHSG…SFKN). Positions 528–562 (DHDAGHEEDSNASVSGDESPLRQEPCSPGASFFEG) are disordered.

It belongs to the WD repeat MET30/SCONB/SCON-2 family. In terms of assembly, component of the SCF(sconB) E3 ubiquitin ligase complex.

The protein operates within protein modification; protein ubiquitination. Functionally, component of the SCF(sconB) E3 ubiquitin ligase complex involved in the regulation of sulfur metabolite repression, probably by mediating the inactivation or degradation of the metR transcription factor. In Talaromyces stipitatus (strain ATCC 10500 / CBS 375.48 / QM 6759 / NRRL 1006) (Penicillium stipitatum), this protein is Probable E3 ubiquitin ligase complex SCF subunit sconB (sconB).